Here is a 485-residue protein sequence, read N- to C-terminus: Glutamyl-tRNA(Gln) amidotransferase subunit A (485 aa).

Residues Lys78 and Ser153 each act as charge relay system in the active site. Ser177 functions as the Acyl-ester intermediate in the catalytic mechanism.

It belongs to the amidase family. GatA subfamily. As to quaternary structure, heterotrimer of A, B and C subunits.

The enzyme catalyses L-glutamyl-tRNA(Gln) + L-glutamine + ATP + H2O = L-glutaminyl-tRNA(Gln) + L-glutamate + ADP + phosphate + H(+). Its function is as follows. Allows the formation of correctly charged Gln-tRNA(Gln) through the transamidation of misacylated Glu-tRNA(Gln) in organisms which lack glutaminyl-tRNA synthetase. The reaction takes place in the presence of glutamine and ATP through an activated gamma-phospho-Glu-tRNA(Gln). The chain is Glutamyl-tRNA(Gln) amidotransferase subunit A from Geobacter sp. (strain M21).